Consider the following 113-residue polypeptide: UPF0145 protein MTH_544 (113 aa).

The protein belongs to the UPF0145 family.

This Methanothermobacter thermautotrophicus (strain ATCC 29096 / DSM 1053 / JCM 10044 / NBRC 100330 / Delta H) (Methanobacterium thermoautotrophicum) protein is UPF0145 protein MTH_544.